The chain runs to 425 residues: L-lysine N6-monooxygenase (425 aa).

8 to 14 is an FAD binding site; it reads IGVGTGP.

Belongs to the lysine N(6)-hydroxylase/L-ornithine N(5)-oxygenase family. The cofactor is FAD.

The protein resides in the cytoplasm. The protein localises to the cell membrane. It carries out the reaction L-lysine + NADPH + O2 = N(6)-hydroxy-L-lysine + NADP(+) + H2O. Its pathway is siderophore biosynthesis; aerobactin biosynthesis. In terms of biological role, flavoprotein monooxygenase required for N-hydroxylation of lysine. Involved in the biosynthesis of the siderophore aerobactin which is a chelator that mediates the high-affinity iron transport systems induced by the organism under iron-stressed conditions. The chain is L-lysine N6-monooxygenase from Escherichia coli.